Reading from the N-terminus, the 117-residue chain is Large ribosomal subunit protein bL20 (117 aa).

This sequence belongs to the bacterial ribosomal protein bL20 family.

Binds directly to 23S ribosomal RNA and is necessary for the in vitro assembly process of the 50S ribosomal subunit. It is not involved in the protein synthesizing functions of that subunit. The protein is Large ribosomal subunit protein bL20 of Rickettsia felis (strain ATCC VR-1525 / URRWXCal2) (Rickettsia azadi).